The sequence spans 363 residues: UV excision repair protein RAD23 homolog A (363 aa).

The region spanning 1–81 (MAVTITLKTL…VVVMVTKTKA (81 aa)) is the Ubiquitin-like domain. A disordered region spans residues 81–160 (AGQGTSAPPE…EDAASTLVTG (80 aa)). Low complexity predominate over residues 85–103 (TSAPPEASPTAAPESSTSF). Residue K122 forms a Glycyl lysine isopeptide (Lys-Gly) (interchain with G-Cter in ubiquitin) linkage. A phosphoserine mark is found at S123, S128, S133, S136, and S138. Positions 126 to 147 (EESAPTTSPESVSGSVPSSGSS) are enriched in low complexity. Positions 161–201 (SEYETMLTEIMSMGYERERVVAALRASYNNPHRAVEYLLTG) constitute a UBA 1 domain. The disordered stretch occupies residues 203-227 (PGSPEPEHGSVQESQVSEQPATEAA). The residue at position 205 (S205) is a Phosphoserine. Positions 213-222 (VQESQVSEQP) are enriched in polar residues. Residues S295 and S357 each carry the phosphoserine modification. The UBA 2 domain occupies 318–358 (PQEKEAIERLKALGFPESLVIQAYFACEKNENLAANFLLSQ). Residues 319 to 363 (QEKEAIERLKALGFPESLVIQAYFACEKNENLAANFLLSQNFDDE) are HIV-1 vpr binding.

The protein belongs to the RAD23 family. As to quaternary structure, interacts with XPC; the interaction is suggesting the existence of a functional equivalent variant XPC complex. Interacts with PSMD4 and PSMC5. Interacts with ATXN3. Interacts with UBQLN2. In terms of assembly, (Microbial infection) Interacts with HIV-1 Vpr.

It is found in the nucleus. Its function is as follows. Multiubiquitin chain receptor involved in modulation of proteasomal degradation. Binds to 'Lys-48'-linked polyubiquitin chains in a length-dependent manner and with a lower affinity to 'Lys-63'-linked polyubiquitin chains. Proposed to be capable to bind simultaneously to the 26S proteasome and to polyubiquitinated substrates and to deliver ubiquitinated proteins to the proteasome. Involved in nucleotide excision repair and is thought to be functional equivalent for RAD23B in global genome nucleotide excision repair (GG-NER) by association with XPC. In vitro, the XPC:RAD23A dimer has NER activity. Can stabilize XPC. Functionally, (Microbial infection) Involved in Vpr-dependent replication of HIV-1 in non-proliferating cells and primary macrophages. Required for the association of HIV-1 Vpr with the host proteasome. In Homo sapiens (Human), this protein is UV excision repair protein RAD23 homolog A (RAD23A).